The sequence spans 424 residues: Type II methyltransferase M.BspRI (424 aa).

The SAM-dependent MTase C5-type domain maps to 58 to 408 (FNVLSLFCGA…KSIAQFAADY (351 aa)). Catalysis depends on Cys-156, which acts as the S-methylcysteine intermediate. At Cys-181 the chain carries S-methylcysteine; by autocatalysis.

It belongs to the class I-like SAM-binding methyltransferase superfamily. C5-methyltransferase family. In terms of assembly, monomer. In the absence of DNA, can self-methylate two cysteine residues.

It carries out the reaction a 2'-deoxycytidine in DNA + S-adenosyl-L-methionine = a 5-methyl-2'-deoxycytidine in DNA + S-adenosyl-L-homocysteine + H(+). Its function is as follows. A methylase, recognizes the double-stranded sequence 5'-GGCC-3', methylates C-3 on both strands, and protects the DNA from cleavage by the BspRI endonuclease. In Lysinibacillus sphaericus (Bacillus sphaericus), this protein is Type II methyltransferase M.BspRI (bspRIM).